Here is a 54-residue protein sequence, read N- to C-terminus: Movement protein p6 (54 aa).

Topologically, residues 1 to 10 (MDCVLRSYLL) are lumenal. The helical transmembrane segment at 11–31 (LAFGFLICLFLFCLVVFIWFV) threads the bilayer. The Cytoplasmic portion of the chain corresponds to 32 to 54 (YKQILFRTTAQSNEARHNHSTVV).

Homodimer; disulfide-linked.

Its subcellular location is the host rough endoplasmic reticulum membrane. Functionally, transports viral genome to neighboring plant cells directly through plasmosdesmata, without any budding. The movement protein allows efficient cell to cell propagation, by bypassing the host cell wall barrier. Two movement proteins, p6, Hsp70h and three structural proteins, CP, CPm, and P64 are essential for cell-cell movement. Also plays a role in virion formation. Together with CPm and p64, encapsidates the 5'-terminal portion of the viral genome. The chain is Movement protein p6 from Beet yellows virus (isolate Ukraine) (BYV).